The chain runs to 2014 residues: AP-1 accessory protein LAA1 (2014 aa).

In terms of assembly, interacts with the clathrin-associated adapter complex AP-1. Interacts directly with LAA2.

It localises to the golgi apparatus. Its subcellular location is the cytoplasmic vesicle. The protein localises to the clathrin-coated vesicle. Its function is as follows. Involved in localization of clathrin adapter protein complex-1 (AP-1) and subsequent AP-1-mediated clathrin-coated vesicle cargo loading. In complex with LAA2, cooperates with the small GTPase ARF1 and the phosphatidyl-inositol-4-phosphate (PI4P) synthesis to confer temporal specificity to AP-1 recruitment. The protein is AP-1 accessory protein LAA1 of Saccharomyces cerevisiae (strain ATCC 204508 / S288c) (Baker's yeast).